Reading from the N-terminus, the 152-residue chain is Xanthine-guanine phosphoribosyltransferase (152 aa).

Residues 37–38, arginine 69, and 88–96 each bind 5-phospho-alpha-D-ribose 1-diphosphate; these read RG and DDLVDTGGT. GMP is bound at residue arginine 69. Aspartate 89 is a Mg(2+) binding site. 2 residues coordinate guanine: aspartate 92 and isoleucine 135. 2 residues coordinate xanthine: aspartate 92 and isoleucine 135. GMP contacts are provided by residues 92–96 and 134–135; these read DTGGT and WI.

This sequence belongs to the purine/pyrimidine phosphoribosyltransferase family. XGPT subfamily. Homotetramer. It depends on Mg(2+) as a cofactor.

The protein resides in the cell inner membrane. It catalyses the reaction GMP + diphosphate = guanine + 5-phospho-alpha-D-ribose 1-diphosphate. It carries out the reaction XMP + diphosphate = xanthine + 5-phospho-alpha-D-ribose 1-diphosphate. The catalysed reaction is IMP + diphosphate = hypoxanthine + 5-phospho-alpha-D-ribose 1-diphosphate. It functions in the pathway purine metabolism; GMP biosynthesis via salvage pathway; GMP from guanine: step 1/1. It participates in purine metabolism; XMP biosynthesis via salvage pathway; XMP from xanthine: step 1/1. Functionally, purine salvage pathway enzyme that catalyzes the transfer of the ribosyl-5-phosphate group from 5-phospho-alpha-D-ribose 1-diphosphate (PRPP) to the N9 position of the 6-oxopurines guanine and xanthine to form the corresponding ribonucleotides GMP (guanosine 5'-monophosphate) and XMP (xanthosine 5'-monophosphate), with the release of PPi. To a lesser extent, also acts on hypoxanthine. The protein is Xanthine-guanine phosphoribosyltransferase of Escherichia coli (strain UTI89 / UPEC).